A 148-amino-acid chain; its full sequence is uncharacterized protein (148 aa).

An HTH asnC-type domain is found at Met-4–Met-65. Residues Tyr-23–Asp-42 constitute a DNA-binding region (H-T-H motif).

This is an uncharacterized protein from Pyrococcus furiosus (strain ATCC 43587 / DSM 3638 / JCM 8422 / Vc1).